Reading from the N-terminus, the 484-residue chain is 3-isopropylmalate dehydratase large subunit (484 aa).

Residues Cys-352, Cys-412, and Cys-415 each contribute to the [4Fe-4S] cluster site. The segment at 463–484 (TLSSPSDLDPAPASAAIRTDAA) is disordered. Low complexity predominate over residues 464–478 (LSSPSDLDPAPASAA).

This sequence belongs to the aconitase/IPM isomerase family. LeuC type 1 subfamily. As to quaternary structure, heterodimer of LeuC and LeuD. Requires [4Fe-4S] cluster as cofactor.

It carries out the reaction (2R,3S)-3-isopropylmalate = (2S)-2-isopropylmalate. It functions in the pathway amino-acid biosynthesis; L-leucine biosynthesis; L-leucine from 3-methyl-2-oxobutanoate: step 2/4. Functionally, catalyzes the isomerization between 2-isopropylmalate and 3-isopropylmalate, via the formation of 2-isopropylmaleate. This chain is 3-isopropylmalate dehydratase large subunit, found in Pseudarthrobacter chlorophenolicus (strain ATCC 700700 / DSM 12829 / CIP 107037 / JCM 12360 / KCTC 9906 / NCIMB 13794 / A6) (Arthrobacter chlorophenolicus).